The primary structure comprises 181 residues: Translation initiation factor IF-3 (181 aa).

Belongs to the IF-3 family. In terms of assembly, monomer.

It localises to the cytoplasm. IF-3 binds to the 30S ribosomal subunit and shifts the equilibrium between 70S ribosomes and their 50S and 30S subunits in favor of the free subunits, thus enhancing the availability of 30S subunits on which protein synthesis initiation begins. The polypeptide is Translation initiation factor IF-3 (Idiomarina loihiensis (strain ATCC BAA-735 / DSM 15497 / L2-TR)).